We begin with the raw amino-acid sequence, 425 residues long: Riboflavin biosynthesis protein RibBA (425 aa).

The DHBP synthase stretch occupies residues 1–204 (MTRLDSVERA…IADLIEWRRK (204 aa)). D-ribulose 5-phosphate is bound by residues 28–29 (RE), aspartate 33, 141–145 (RPGHT), and glutamate 165. A Mg(2+)-binding site is contributed by glutamate 29. Histidine 144 serves as a coordination point for Mg(2+). Residues 205–425 (HEKHIERIAE…HLPGEFGGAL (221 aa)) are GTP cyclohydrolase II. Residue 259–263 (RVHSE) participates in GTP binding. Zn(2+) contacts are provided by cysteine 264, cysteine 275, and cysteine 277. Residues glutamine 280, 303 to 305 (EGR), and threonine 325 contribute to the GTP site. Aspartate 337 acts as the Proton acceptor; for GTP cyclohydrolase activity in catalysis. The active-site Nucleophile; for GTP cyclohydrolase activity is arginine 339. 2 residues coordinate GTP: threonine 360 and lysine 365.

In the N-terminal section; belongs to the DHBP synthase family. This sequence in the C-terminal section; belongs to the GTP cyclohydrolase II family. The cofactor is Mg(2+). It depends on Mn(2+) as a cofactor. Requires Zn(2+) as cofactor.

The catalysed reaction is D-ribulose 5-phosphate = (2S)-2-hydroxy-3-oxobutyl phosphate + formate + H(+). It carries out the reaction GTP + 4 H2O = 2,5-diamino-6-hydroxy-4-(5-phosphoribosylamino)-pyrimidine + formate + 2 phosphate + 3 H(+). The protein operates within cofactor biosynthesis; riboflavin biosynthesis; 2-hydroxy-3-oxobutyl phosphate from D-ribulose 5-phosphate: step 1/1. It participates in cofactor biosynthesis; riboflavin biosynthesis; 5-amino-6-(D-ribitylamino)uracil from GTP: step 1/4. Catalyzes the conversion of D-ribulose 5-phosphate to formate and 3,4-dihydroxy-2-butanone 4-phosphate. Functionally, catalyzes the conversion of GTP to 2,5-diamino-6-ribosylamino-4(3H)-pyrimidinone 5'-phosphate (DARP), formate and pyrophosphate. This is Riboflavin biosynthesis protein RibBA from Mycolicibacterium paratuberculosis (strain ATCC BAA-968 / K-10) (Mycobacterium paratuberculosis).